A 443-amino-acid polypeptide reads, in one-letter code: Glutamate-1-semialdehyde 2,1-aminomutase (443 aa).

Lys-272 bears the N6-(pyridoxal phosphate)lysine mark.

The protein belongs to the class-III pyridoxal-phosphate-dependent aminotransferase family. HemL subfamily. As to quaternary structure, homodimer. It depends on pyridoxal 5'-phosphate as a cofactor.

It is found in the cytoplasm. It carries out the reaction (S)-4-amino-5-oxopentanoate = 5-aminolevulinate. It participates in porphyrin-containing compound metabolism; protoporphyrin-IX biosynthesis; 5-aminolevulinate from L-glutamyl-tRNA(Glu): step 2/2. It functions in the pathway porphyrin-containing compound metabolism; chlorophyll biosynthesis. This Chloroflexus aurantiacus (strain ATCC 29366 / DSM 635 / J-10-fl) protein is Glutamate-1-semialdehyde 2,1-aminomutase.